The sequence spans 326 residues: Olfactory receptor 11H12 (326 aa).

Over 1-44 the chain is Extracellular; it reads MCPLTLQVTGLMNVSEPNSSFAFVNEFILQGFTCEWTIQIFLFS. 2 N-linked (GlcNAc...) asparagine glycosylation sites follow: Asn-13 and Asn-18. A helical membrane pass occupies residues 45-65; that stretch reads LFTTTYALTITGNGAIAFVLW. The Cytoplasmic segment spans residues 66–72; the sequence is CDWRLHT. The chain crosses the membrane as a helical span at residues 73–93; sequence PMYMFLGNFSFLEIWYVSSTV. The Extracellular segment spans residues 94-112; sequence PKMLVNFLSEKKNISFAGC. A glycan (N-linked (GlcNAc...) asparagine) is linked at Asn-106. A disulfide bridge connects residues Cys-112 and Cys-194. A helical transmembrane segment spans residues 113–133; the sequence is FLQFYFFFSLGTSECLLLTVM. At 134–158 the chain is on the cytoplasmic side; that stretch reads AFDQYLAICRPLLYPNIMTGHLCAK. Residues 159-179 traverse the membrane as a helical segment; it reads LVILCWVCGFLWFLIPIVLIS. At 180-216 the chain is on the extracellular side; sequence QMPFCGPNIIDHVVCDPGPRFALDCVSAPRIQLFCYT. Residues 217–237 form a helical membrane-spanning segment; the sequence is LSSLVIFGNFLFIIGSYTLVL. Residues 238–259 lie on the Cytoplasmic side of the membrane; it reads KAVLGMPSSTGRHKAFSTCGSH. Residues 260 to 280 traverse the membrane as a helical segment; that stretch reads LAVVSLCYSSLMVMYVSPGLG. Residues 281–287 are Extracellular-facing; the sequence is HSTGMQK. A helical membrane pass occupies residues 288-308; that stretch reads IETLFYAMVTPLFNPLIYSLQ. Residues 309–326 are Cytoplasmic-facing; the sequence is NKEIKAALRKVLGSSNII.

This sequence belongs to the G-protein coupled receptor 1 family.

The protein resides in the cell membrane. Odorant receptor. The polypeptide is Olfactory receptor 11H12 (OR11H12) (Homo sapiens (Human)).